Reading from the N-terminus, the 241-residue chain is Putative CRISPR-associated endoribonuclease-like protein Cas6 (241 aa).

It belongs to the CRISPR-associated protein Cas6/Cse3/CasE family. In terms of assembly, binds crRNA.

CRISPR (clustered regularly interspaced short palindromic repeat), is an adaptive immune system that provides protection against mobile genetic elements (viruses, transposable elements and conjugative plasmids). CRISPR clusters contain sequences complementary to antecedent mobile elements and target invading nucleic acids. CRISPR clusters are transcribed and processed into CRISPR RNA (crRNA), also called psiRNA (prokaryotic silencing) in this organism (Potential). The protein is Putative CRISPR-associated endoribonuclease-like protein Cas6 (cas6b) of Pyrococcus furiosus (strain ATCC 43587 / DSM 3638 / JCM 8422 / Vc1).